We begin with the raw amino-acid sequence, 249 residues long: Methyltransferase 1 (249 aa).

It belongs to the FkbM methyltransferase family.

Its pathway is secondary metabolite biosynthesis. Its function is as follows. Methyltransferase; part of the pathway that mediates the biosynthesis of tenellin-type 2-pyridones, iron-chelating compounds involved in iron stress tolerance, competition with the natural competitor fungus Metarhizium robertsii and insect hosts infection. Methylates pyridovericin-N-O-(beta-D-glucopyranoside) produced by the UDP-glucosyltransferase GT1 to yield pyridovericin-N-O-(4-O-methyl-beta-D-glucopyranoside) (PMGP). The pathway begins with the assembly of the polyketide-amino acid backbone by the hybrid PKS-NRPS tenS with the help of the enoyl reductase tenC. These enzymes catalyze the synthesis of the pyrrolidine-2-dione intermediates pretellinin A, 11-hydropretellenin A, 12-hydropretellenin A, 13-hydropretellenin A, 14-hydropretellenin A, 12-oxopretellenin A and prototellinin D. The cytochrome P450 monooxygenase tenA then catalyzes an oxidative ring expansion of pretenellin A and 14-hydropretellenin A to form the 2-pyridone core, leading to pretenellin B and pyridovericin, respectively. The cytochrome P450 monooxygenase tenB is then required for the selective N-hydroxylation of the 2-pyridone nitrogen of yield tellinin and 15-hydroxytellenin (15-HT), respectively. The UDP-glucosyltransferase GT1 and the methyltransferase MT1, located outside the tenS gene cluster, contribute to the stepwise glycosylation and methylation of 15-HT to obtain the glycoside pyridovericin-N-O-(4-O-methyl-beta-D-glucopyranoside) (PMGP). Additional related compounds such as 1-O-methyl-15-HT, (8Z)-1-O-methyl-15-HT, and O-methyltenellin A are also produced but the enzymes involved in their biosynthesis have still to be determined. This chain is Methyltransferase 1, found in Beauveria bassiana (strain ARSEF 2860) (White muscardine disease fungus).